The primary structure comprises 217 residues: Enolase-phosphatase E1 (217 aa).

Mg(2+) contacts are provided by Asp-9 and Glu-11. Substrate-binding positions include 112–113 (SS) and Lys-151. Asp-176 provides a ligand contact to Mg(2+).

It belongs to the HAD-like hydrolase superfamily. MasA/MtnC family. In terms of assembly, monomer. Mg(2+) is required as a cofactor.

The protein localises to the cytoplasm. The protein resides in the nucleus. It carries out the reaction 5-methylsulfanyl-2,3-dioxopentyl phosphate + H2O = 1,2-dihydroxy-5-(methylsulfanyl)pent-1-en-3-one + phosphate. It functions in the pathway amino-acid biosynthesis; L-methionine biosynthesis via salvage pathway; L-methionine from S-methyl-5-thio-alpha-D-ribose 1-phosphate: step 3/6. The protein operates within amino-acid biosynthesis; L-methionine biosynthesis via salvage pathway; L-methionine from S-methyl-5-thio-alpha-D-ribose 1-phosphate: step 4/6. Its function is as follows. Bifunctional enzyme that catalyzes the enolization of 2,3-diketo-5-methylthiopentyl-1-phosphate (DK-MTP-1-P) into the intermediate 2-hydroxy-3-keto-5-methylthiopentenyl-1-phosphate (HK-MTPenyl-1-P), which is then dephosphorylated to form the acireductone 1,2-dihydroxy-3-keto-5-methylthiopentene (DHK-MTPene). The protein is Enolase-phosphatase E1 of Lachancea thermotolerans (strain ATCC 56472 / CBS 6340 / NRRL Y-8284) (Yeast).